Here is a 141-residue protein sequence, read N- to C-terminus: Hemoglobin subunit mu (141 aa).

The 141-residue stretch at 1-141 (MLSAQERAQI…VAVVLTEKYR (141 aa)) folds into the Globin domain. The heme b site is built by histidine 58 and histidine 87.

Belongs to the globin family. In terms of tissue distribution, expressed in erythroid tissues.

The chain is Hemoglobin subunit mu (HBM) from Homo sapiens (Human).